Reading from the N-terminus, the 111-residue chain is UPF0060 membrane protein Cbei_2176 (111 aa).

Transmembrane regions (helical) follow at residues 7–27 (ILYF…IWIW), 33–53 (SYLY…IPTL), 60–80 (FGKV…LWGW), and 85–105 (IVPD…VIVI).

This sequence belongs to the UPF0060 family.

It localises to the cell membrane. The polypeptide is UPF0060 membrane protein Cbei_2176 (Clostridium beijerinckii (strain ATCC 51743 / NCIMB 8052) (Clostridium acetobutylicum)).